We begin with the raw amino-acid sequence, 92 residues long: Small ribosomal subunit protein bS20 (92 aa).

Residues 1 to 20 (MANIASAKKRARQAENNRAH) form a disordered region.

It belongs to the bacterial ribosomal protein bS20 family.

Functionally, binds directly to 16S ribosomal RNA. The protein is Small ribosomal subunit protein bS20 of Methylococcus capsulatus (strain ATCC 33009 / NCIMB 11132 / Bath).